The primary structure comprises 168 residues: MRCLRIRERRDLFAFPYPIAVWREPPRSLEVVSDLALSYGVEHIYTVGDVVTKNFLDYGVTPTSAAVDEKTRRGLPVEQHRKFQRVIKVVNPPGYITEEAWAAVEEAVGGGVLIKVEGEEDMLALAFIKMAPPRSLVVYGHYKGALIAVMVDWYRDAIDRLLQYLEKC.

Residues D49, V50, V51, D68, K70, and E120 each contribute to the GTP site.

This sequence belongs to the GTP-dependent DPCK family.

It catalyses the reaction 3'-dephospho-CoA + GTP = GDP + CoA + H(+). The protein operates within cofactor biosynthesis; coenzyme A biosynthesis. Functionally, catalyzes the GTP-dependent phosphorylation of the 3'-hydroxyl group of dephosphocoenzyme A to form coenzyme A (CoA). In Pyrobaculum neutrophilum (strain DSM 2338 / JCM 9278 / NBRC 100436 / V24Sta) (Thermoproteus neutrophilus), this protein is GTP-dependent dephospho-CoA kinase.